A 64-amino-acid chain; its full sequence is Neurotoxin BmK-II (64 aa).

Residues 2–64 (RDAYIAKPHN…VPIRIPGNCH (63 aa)) form the LCN-type CS-alpha/beta domain. 4 disulfide bridges follow: Cys-12–Cys-63, Cys-16–Cys-36, Cys-22–Cys-46, and Cys-26–Cys-48.

Belongs to the long (4 C-C) scorpion toxin superfamily. Sodium channel inhibitor family. Alpha subfamily. As to expression, expressed by the venom gland.

The protein localises to the secreted. Its function is as follows. Binds to sodium channels (Nav) and inhibits the inactivation of the activated channels, thereby blocking neuronal transmission. This toxin is active against mammals and insects. BmK-II is 6-fold less toxic than BmK-I. This Olivierus martensii (Manchurian scorpion) protein is Neurotoxin BmK-II.